A 115-amino-acid polypeptide reads, in one-letter code: Putative type I restriction enzyme MpnIIP endonuclease subunit middle part (115 aa).

Its function is as follows. The middle section of a putative type I restriction enzyme that if reconstituted might recognize 5'-GAN(7)TAY-3' and cleave a random distance away. Subunit R is required for both nuclease and ATPase activities, but not for modification. This Mycoplasma pneumoniae (strain ATCC 29342 / M129 / Subtype 1) (Mycoplasmoides pneumoniae) protein is Putative type I restriction enzyme MpnIIP endonuclease subunit middle part.